A 264-amino-acid polypeptide reads, in one-letter code: Cytosolic Fe-S cluster assembly factor Nubp2 homolog (264 aa).

An ATP-binding site is contributed by 14–21; it reads GKGGVGKS. Residues Cys188 and Cys191 each contribute to the [4Fe-4S] cluster site.

The protein belongs to the Mrp/NBP35 ATP-binding proteins family. NUBP2/CFD1 subfamily. As to quaternary structure, heterotetramer of 2 Nubp1 and 2 Nubp2 chains. It depends on [4Fe-4S] cluster as a cofactor.

It localises to the cytoplasm. Component of the cytosolic iron-sulfur (Fe/S) protein assembly (CIA) machinery. Required for maturation of extramitochondrial Fe-S proteins. The Nubp1-Nubp2 heterotetramer forms a Fe-S scaffold complex, mediating the de novo assembly of an Fe-S cluster and its transfer to target apoproteins. The protein is Cytosolic Fe-S cluster assembly factor Nubp2 homolog of Drosophila grimshawi (Hawaiian fruit fly).